Reading from the N-terminus, the 171-residue chain is 3-hydroxydecanoyl-[acyl-carrier-protein] dehydratase (171 aa).

The active site involves histidine 70.

The protein belongs to the thioester dehydratase family. FabA subfamily. In terms of assembly, homodimer.

Its subcellular location is the cytoplasm. It carries out the reaction a (3R)-hydroxyacyl-[ACP] = a (2E)-enoyl-[ACP] + H2O. It catalyses the reaction (3R)-hydroxydecanoyl-[ACP] = (2E)-decenoyl-[ACP] + H2O. The catalysed reaction is (2E)-decenoyl-[ACP] = (3Z)-decenoyl-[ACP]. It participates in lipid metabolism; fatty acid biosynthesis. In terms of biological role, necessary for the introduction of cis unsaturation into fatty acids. Catalyzes the dehydration of (3R)-3-hydroxydecanoyl-ACP to E-(2)-decenoyl-ACP and then its isomerization to Z-(3)-decenoyl-ACP. Can catalyze the dehydratase reaction for beta-hydroxyacyl-ACPs with saturated chain lengths up to 16:0, being most active on intermediate chain length. This chain is 3-hydroxydecanoyl-[acyl-carrier-protein] dehydratase, found in Shewanella pealeana (strain ATCC 700345 / ANG-SQ1).